Reading from the N-terminus, the 463-residue chain is Glycine--tRNA ligase (463 aa).

Residues Arg100 and Glu175 each coordinate substrate. ATP is bound by residues 207–209 (RNE), 217–222 (FRTREF), 291–292 (EL), and 335–338 (GADR). A substrate-binding site is contributed by 222 to 226 (FEQME). 331–335 (EPSVG) contributes to the substrate binding site.

This sequence belongs to the class-II aminoacyl-tRNA synthetase family. As to quaternary structure, homodimer.

It localises to the cytoplasm. The catalysed reaction is tRNA(Gly) + glycine + ATP = glycyl-tRNA(Gly) + AMP + diphosphate. Functionally, catalyzes the attachment of glycine to tRNA(Gly). The polypeptide is Glycine--tRNA ligase (Clostridium kluyveri (strain NBRC 12016)).